The following is a 79-amino-acid chain: MORN repeat-containing protein 2 (79 aa).

2 MORN repeats span residues 15–37 and 38–60; these read YEGHFKDNMFHGLGTYTFPNGAK and YTGNFNENRVEGEGQYTDIQGLE.

The polypeptide is MORN repeat-containing protein 2 (MORN2) (Bos taurus (Bovine)).